Here is a 256-residue protein sequence, read N- to C-terminus: Thrombin-like enzyme cerastocytin (256 aa).

A signal peptide spans M1–A18. Residues Q19 to L24 constitute a propeptide that is removed on maturation. One can recognise a Peptidase S1 domain in the interval V25–A247. Disulfide bonds link C31/C161, C98/C254, C140/C208, C172/C187, and C198/C223. N44 carries N-linked (GlcNAc...) asparagine glycosylation. Active-site charge relay system residues include H65 and D108. N119, N120, and N152 each carry an N-linked (GlcNAc...) asparagine glycan. The Charge relay system role is filled by S202.

Belongs to the peptidase S1 family. Snake venom subfamily. Monomer. As to expression, expressed by the venom gland.

Its subcellular location is the secreted. With respect to regulation, its platelets aggregating activity is inhibited by chlorpromazine, theophylline mepacrine. Its platelet aggregating activity and its amidolytic activity are inhibited by PMSF, TPCK, TLCK and soybean trypsin inhibitors. Is unaffected by hirudin or by antithrombin-III in the presence of heparin. Its function is as follows. Thrombin-like snake venom serine protease which potently induces platelet aggregation and has fibrinogenolytic activities. Clots purified fibrinogen and hydrolyzes alpha-chains (FGA). High concentrations of this enzyme also cleave prothrombin (F2) and factor X (F10). Is also able to activate factor XIII (F8). The polypeptide is Thrombin-like enzyme cerastocytin (Cerastes cerastes (Horned desert viper)).